Consider the following 355-residue polypeptide: Phosphoribosylformylglycinamidine cyclo-ligase (355 aa).

It belongs to the AIR synthase family.

The protein resides in the cytoplasm. It catalyses the reaction 2-formamido-N(1)-(5-O-phospho-beta-D-ribosyl)acetamidine + ATP = 5-amino-1-(5-phospho-beta-D-ribosyl)imidazole + ADP + phosphate + H(+). It participates in purine metabolism; IMP biosynthesis via de novo pathway; 5-amino-1-(5-phospho-D-ribosyl)imidazole from N(2)-formyl-N(1)-(5-phospho-D-ribosyl)glycinamide: step 2/2. In Methylobacterium nodulans (strain LMG 21967 / CNCM I-2342 / ORS 2060), this protein is Phosphoribosylformylglycinamidine cyclo-ligase.